The chain runs to 449 residues: Phosphoglucosamine mutase (449 aa).

Ser104 (phosphoserine intermediate) is an active-site residue. Ser104, Asp243, Asp245, and Asp247 together coordinate Mg(2+). Residue Ser104 is modified to Phosphoserine.

It belongs to the phosphohexose mutase family. Requires Mg(2+) as cofactor. In terms of processing, activated by phosphorylation.

It catalyses the reaction alpha-D-glucosamine 1-phosphate = D-glucosamine 6-phosphate. Its function is as follows. Catalyzes the conversion of glucosamine-6-phosphate to glucosamine-1-phosphate. This chain is Phosphoglucosamine mutase, found in Xanthomonas euvesicatoria pv. vesicatoria (strain 85-10) (Xanthomonas campestris pv. vesicatoria).